A 369-amino-acid chain; its full sequence is Putative esterase slr0264 (369 aa).

Catalysis depends on charge relay system residues Ser162, Asp303, and His334.

Belongs to the AB hydrolase superfamily. AB hydrolase 4 family.

The protein is Putative esterase slr0264 of Synechocystis sp. (strain ATCC 27184 / PCC 6803 / Kazusa).